Here is a 447-residue protein sequence, read N- to C-terminus: Probable rhamnogalacturonase C (447 aa).

The first 19 residues, 1 to 19 (MQVKLFYTLALWAPILVSA), serve as a signal peptide directing secretion. N-linked (GlcNAc...) asparagine glycans are attached at residues Asn-37 and Asn-65. Cys-40 and Cys-66 form a disulfide bridge. Asp-217 functions as the Proton donor in the catalytic mechanism. The cysteines at positions 219 and 236 are disulfide-linked. Asn-237 and Asn-252 each carry an N-linked (GlcNAc...) asparagine glycan. His-291 is a catalytic residue. Asn-316 is a glycosylation site (N-linked (GlcNAc...) asparagine). Intrachain disulfides connect Cys-338–Cys-344 and Cys-366–Cys-375.

Belongs to the glycosyl hydrolase 28 family.

It localises to the secreted. Pectinolytic enzymes consist of four classes of enzymes: pectine lyase, polygalacturonase, pectin methylesterase and rhamnogalacturonase. Hydrolyzes alpha-D-galacturonopyranosyl-(1,2)-alpha-L-rhamnopyranosyl linkages in the backbone of the hairy regions of pectins. This chain is Probable rhamnogalacturonase C (rhgC), found in Aspergillus flavus (strain ATCC 200026 / FGSC A1120 / IAM 13836 / NRRL 3357 / JCM 12722 / SRRC 167).